The sequence spans 1771 residues: Fatty acid synthase alpha subunit pkiB (1771 aa).

Over residues 108 to 130 (SQPTQPQFEPTSPSHLTKRSPSP) the composition is skewed to polar residues. Positions 108 to 133 (SQPTQPQFEPTSPSHLTKRSPSPSKA) are disordered. The Carrier domain maps to 143 to 221 (ELTLQAGHVI…ESFQPEFSGI (79 aa)). Serine 181 carries the O-(pantetheine 4'-phosphoryl)serine modification. Residues 575 to 771 (HKAVLVTGAG…CGAVIGWTRG (197 aa)) form a beta-ketoacyl reductase region. The Ketosynthase family 3 (KS3) domain occupies 1011 to 1531 (KELLHEVAVE…QKGAINIMVS (521 aa)). Active-site for beta-ketoacyl synthase activity residues include cysteine 1197, histidine 1416, and histidine 1457. Mg(2+) is bound by residues aspartate 1650, valine 1651, and glutamate 1652. Acetyl-CoA contacts are provided by residues 1650–1652 (DVE), tyrosine 1676, serine 1686, 1695–1705 (EAAFKSLQTTS), 1719–1722 (EVGG), and 1753–1755 (ISH). The Mg(2+) site is built by serine 1754 and histidine 1755.

Belongs to the thiolase-like superfamily. Fungal fatty acid synthetase subunit alpha family. As to quaternary structure, [Alpha(6)beta(6)] hexamers of two multifunctional subunits (alpha and beta).

It carries out the reaction acetyl-CoA + n malonyl-CoA + 2n NADPH + 4n H(+) = a long-chain-acyl-CoA + n CoA + n CO2 + 2n NADP(+).. It catalyses the reaction a fatty acyl-[ACP] + malonyl-[ACP] + H(+) = a 3-oxoacyl-[ACP] + holo-[ACP] + CO2. The enzyme catalyses a (3R)-hydroxyacyl-[ACP] + NADP(+) = a 3-oxoacyl-[ACP] + NADPH + H(+). The protein operates within secondary metabolite biosynthesis. In terms of biological role, fatty acid synthase alpha subunit; part of the pki gene cluster that mediates the biosynthesis of 2,4-dihydroxy-3-methyl-6-(2-oxoundecyl)benzaldehyde. The first step in the pathway is the generation of the decanoyl starter unit by the FAS composed of subunits pkiB and pkiC, which is then transferred directly from the FAS to the SAT domain of the non-reducing polyketide synthase pkiA. PkiA condenses the decanoyyl starter unit with 4 malonyl-CoA units and performs one methylation step to yield 2,4-dihydroxy-3-methyl-6-(2-oxoundecyl)benzaldehyde. This Emericella nidulans (strain FGSC A4 / ATCC 38163 / CBS 112.46 / NRRL 194 / M139) (Aspergillus nidulans) protein is Fatty acid synthase alpha subunit pkiB.